Consider the following 129-residue polypeptide: Small ribosomal subunit protein uS11 (129 aa).

It belongs to the universal ribosomal protein uS11 family. Part of the 30S ribosomal subunit. Interacts with proteins S7 and S18. Binds to IF-3.

Its function is as follows. Located on the platform of the 30S subunit, it bridges several disparate RNA helices of the 16S rRNA. Forms part of the Shine-Dalgarno cleft in the 70S ribosome. This is Small ribosomal subunit protein uS11 from Salmonella newport (strain SL254).